Here is a 702-residue protein sequence, read N- to C-terminus: Solute carrier organic anion transporter family member 1B3 (702 aa).

Residues methionine 1–lysine 28 lie on the Cytoplasmic side of the membrane. The chain crosses the membrane as a helical span at residues methionine 29–methionine 48. The Extracellular segment spans residues lysine 49 to glycine 67. A helical transmembrane segment spans residues leucine 68–glycine 88. Over serine 89–proline 94 the chain is Cytoplasmic. Residues lysine 95–glycine 119 form a helical membrane-spanning segment. The Extracellular portion of the chain corresponds to tyrosine 120 to serine 168. 3 N-linked (GlcNAc...) asparagine glycosylation sites follow: asparagine 134, asparagine 145, and asparagine 151. A helical transmembrane segment spans residues histidine 169 to aspartate 197. Residues aspartate 198 to glycine 216 are Cytoplasmic-facing. Residues methionine 217–isoleucine 237 traverse the membrane as a helical segment. The Extracellular segment spans residues glycine 238–valine 255. A helical membrane pass occupies residues glycine 256–proline 280. The Cytoplasmic segment spans residues lysine 281–serine 331. Phosphoserine occurs at positions 293 and 295. A helical transmembrane segment spans residues isoleucine 332–isoleucine 353. The Extracellular segment spans residues glycine 354 to histidine 373. The helical transmembrane segment at alanine 374–isoleucine 397 threads the bilayer. Over lysine 398–lysine 401 the chain is Cytoplasmic. Residues leucine 402–tyrosine 425 form a helical membrane-spanning segment. Residues phenylalanine 426–tyrosine 537 lie on the Extracellular side of the membrane. Residue asparagine 445 is glycosylated (N-linked (GlcNAc...) asparagine). Residues aspartate 453 to glutamate 508 form the Kazal-like domain. Cystine bridges form between cysteine 459-cysteine 489, cysteine 465-cysteine 485, and cysteine 474-cysteine 506. N-linked (GlcNAc...) asparagine glycosylation is found at asparagine 503 and asparagine 516. Residues valine 538–valine 560 form a helical membrane-spanning segment. Residues lysine 561–alanine 569 lie on the Cytoplasmic side of the membrane. The helical transmembrane segment at leucine 570–isoleucine 595 threads the bilayer. Residues aspartate 596–serine 629 are Extracellular-facing. The helical transmembrane segment at isoleucine 630–methionine 647 threads the bilayer. Topologically, residues lysine 648–methionine 695 are cytoplasmic. At serine 683 the chain carries Phosphoserine.

It belongs to the organo anion transporter (TC 2.A.60) family. Post-translationally, N-glycosylated. Highly expressed in liver, in particular at the basolateral membrane of hepatocytes near the central vein. Expressed in the placenta. In testis, primarily localized to the basal membrane of Sertoli cells and weakly expressed in Leydig cells and within the tubules.

It localises to the basolateral cell membrane. Its subcellular location is the basal cell membrane. The enzyme catalyses estrone 3-sulfate(out) + hydrogencarbonate(in) = estrone 3-sulfate(in) + hydrogencarbonate(out). The catalysed reaction is 17beta-estradiol 17-O-(beta-D-glucuronate)(out) = 17beta-estradiol 17-O-(beta-D-glucuronate)(in). It catalyses the reaction taurocholate(out) = taurocholate(in). It carries out the reaction estrone 3-sulfate(out) = estrone 3-sulfate(in). The enzyme catalyses dehydroepiandrosterone 3-sulfate(out) = dehydroepiandrosterone 3-sulfate(in). The catalysed reaction is leukotriene C4(out) = leukotriene C4(in). It catalyses the reaction L-thyroxine(out) = L-thyroxine(in). It carries out the reaction prostaglandin E2(out) = prostaglandin E2(in). The enzyme catalyses (4E,15E)-bilirubin IXalpha C8-beta-D-glucuronoside(out) = (4E,15E)-bilirubin IXalpha C8-beta-D-glucuronoside(in). The catalysed reaction is bilirubin IXalpha bis-beta-D-glucuronoside(out) = bilirubin IXalpha bis-beta-D-glucuronoside(in). Mediates the Na(+)-independent uptake of organic anions. Shows broad substrate specificity, can transport both organic anions such as bile acid taurocholate (cholyltaurine) and conjugated steroids (17-beta-glucuronosyl estradiol, dehydroepiandrosterone sulfate (DHEAS), and estrone 3-sulfate), as well as eicosanoid leukotriene C4, prostaglandin E2 and L-thyroxine (T4). Hydrogencarbonate/HCO3(-) acts as the probable counteranion that exchanges for organic anions. Shows a pH-sensitive substrate specificity towards sulfated steroids, taurocholate and T4 which may be ascribed to the protonation state of the binding site and leads to a stimulation of substrate transport in an acidic microenvironment. Involved in the clearance of bile acids and organic anions from the liver. Can take up bilirubin glucuronides from plasma into the liver, contributing to the detoxification-enhancing liver-blood shuttling loop. Transports coproporphyrin I and III, by-products of heme synthesis, and may be involved in their hepatic disposition. May contribute to regulate the transport of organic compounds in testes across the blood-testis-barrier. Can transport HMG-CoA reductase inhibitors (also known as statins) such as pitavastatin, a clinically important class of hypolipidemic drugs. May play an important role in plasma and tissue distribution of the structurally diverse chemotherapeutic drugs methotrexate and paclitaxel. May also transport antihypertension agents, such as the angiotensin-converting enzyme (ACE) inhibitor prodrug enalapril, and the highly selective angiotensin II AT1-receptor antagonist valsartan, in the liver. The polypeptide is Solute carrier organic anion transporter family member 1B3 (SLCO1B3) (Homo sapiens (Human)).